A 395-amino-acid polypeptide reads, in one-letter code: Levanbiose-producing levanase (395 aa).

Residue Asp-1 is part of the active site. Substrate-binding positions include 59–60, 124–125, Glu-173, and Trp-261; these read WT and RD.

Belongs to the glycosyl hydrolase 32 family.

The protein localises to the membrane. The catalysed reaction is Hydrolysis of (2-&gt;6)-beta-D-fructofuranan, to remove successive disaccharide residues as levanbiose, i.e. 6-(beta-D-fructofuranosyl)-D-fructose, from the end of the chain.. Catalyzes the degradation of levan mainly into levanbiose (difructose). Can also hydrolyze inulin. The protein is Levanbiose-producing levanase (levB) of Geobacillus stearothermophilus (Bacillus stearothermophilus).